A 414-amino-acid polypeptide reads, in one-letter code: Histidinol dehydrogenase (414 aa).

Tyrosine 116, glutamine 177, and asparagine 200 together coordinate NAD(+). Positions 223, 245, and 248 each coordinate substrate. 2 residues coordinate Zn(2+): glutamine 245 and histidine 248. Residues glutamate 313 and histidine 314 each act as proton acceptor in the active site. Residues histidine 314, aspartate 347, glutamate 401, and histidine 406 each contribute to the substrate site. Aspartate 347 contributes to the Zn(2+) binding site. Zn(2+) is bound at residue histidine 406.

The protein belongs to the histidinol dehydrogenase family. Requires Zn(2+) as cofactor.

The catalysed reaction is L-histidinol + 2 NAD(+) + H2O = L-histidine + 2 NADH + 3 H(+). Its pathway is amino-acid biosynthesis; L-histidine biosynthesis; L-histidine from 5-phospho-alpha-D-ribose 1-diphosphate: step 9/9. Functionally, catalyzes the sequential NAD-dependent oxidations of L-histidinol to L-histidinaldehyde and then to L-histidine. This Staphylococcus epidermidis (strain ATCC 35984 / DSM 28319 / BCRC 17069 / CCUG 31568 / BM 3577 / RP62A) protein is Histidinol dehydrogenase.